The following is a 477-amino-acid chain: Adenylyl cyclase-associated protein 2 (477 aa).

The residue at position 2 (Ala-2) is an N-acetylalanine. Disordered regions lie at residues 224-262 and 274-324; these read SILS…PSRS and ITKG…HAPV. A compositionally biased stretch (pro residues) spans 231 to 248; it reads GLPPPPPPPPPPGPPPPF. Positions 300–318 are enriched in low complexity; the sequence is RSPTKTRTPSPTSSKSNSP. 2 positions are modified to phosphoserine: Ser-301 and Ser-309. One can recognise a C-CAP/cofactor C-like domain in the interval 318-455; it reads PQKHAPVLEL…QGDDYREFPI (138 aa).

This sequence belongs to the CAP family. As to expression, found at relatively high levels in testes, at moderate levels in brain, heart and skeletal muscle, at lower levels in lung, skin, kidney and small intestine, and is undetectable in liver or spleen.

It is found in the cell membrane. Involved in the regulation of actin polymerization. The chain is Adenylyl cyclase-associated protein 2 (Cap2) from Rattus norvegicus (Rat).